Reading from the N-terminus, the 66-residue chain is Large ribosomal subunit protein bL31 (66 aa).

Positions 16, 18, 36, and 39 each coordinate Zn(2+).

It belongs to the bacterial ribosomal protein bL31 family. Type A subfamily. As to quaternary structure, part of the 50S ribosomal subunit. Requires Zn(2+) as cofactor.

Binds the 23S rRNA. The polypeptide is Large ribosomal subunit protein bL31 (Geobacillus thermodenitrificans (strain NG80-2)).